The sequence spans 209 residues: Large ribosomal subunit protein uL3 (209 aa).

It belongs to the universal ribosomal protein uL3 family. In terms of assembly, part of the 50S ribosomal subunit. Forms a cluster with proteins L14 and L19.

Functionally, one of the primary rRNA binding proteins, it binds directly near the 3'-end of the 23S rRNA, where it nucleates assembly of the 50S subunit. The polypeptide is Large ribosomal subunit protein uL3 (Lactiplantibacillus plantarum (strain ATCC BAA-793 / NCIMB 8826 / WCFS1) (Lactobacillus plantarum)).